Consider the following 999-residue polypeptide: Sarcoplasmic/endoplasmic reticulum calcium ATPase 3 (999 aa).

An N-acetylmethionine modification is found at M1. At 1 to 48 (MEEAHLLSAADVLRRFSVTAEGGLSLEQVTDARERYGPNELPTEEGKS) the chain is on the cytoplasmic side. Residue S17 is modified to Phosphoserine. Phosphothreonine is present on T19. S25 is subject to Phosphoserine. The chain crosses the membrane as a helical span at residues 49–69 (LWELVVEQFEDLLVRILLLAA). The Lumenal segment spans residues 70–89 (LVSFVLAWFEEGEETTTAFV). A helical transmembrane segment spans residues 90–110 (EPLVIMLILVANAIVGVWQER). The Cytoplasmic portion of the chain corresponds to 111–253 (NAESAIEALK…PERTPLQRKL (143 aa)). The helical transmembrane segment at 254–273 (DEFGRQLSHAISVICVAVWV) threads the bilayer. Residues 274–295 (INIGHFADPAHGGSWLRGAVYY) are Lumenal-facing. Residues 296 to 313 (FKIAVALAVAAIPEGLPA) form a helical membrane-spanning segment. 4 residues coordinate Ca(2+): V304, A305, I307, and E309. Over 314–757 (VITTCLALGT…EEGRAIYNNM (444 aa)) the chain is Cytoplasmic. D351 functions as the 4-aspartylphosphate intermediate in the catalytic mechanism. Mg(2+) contacts are provided by D351 and T353. T353 lines the ATP pocket. The interval 370 to 400 (AEAEAGTCRLHEFTISGTTYTPEGEVRQGEQ) is interaction with phospholamban 1. Position 415 is a phosphothreonine (T415). ATP-binding residues include E442, R489, K515, R560, T625, G626, and D627. S662 carries the phosphoserine modification. ATP is bound by residues R678 and K684. D703 contributes to the Mg(2+) binding site. Position 706 (N706) interacts with ATP. A helical membrane pass occupies residues 758-777 (KQFIRYLISSNVGEVVCIFL). Residues N768 and E771 each coordinate Ca(2+). Residues 778–787 (TAILGLPEAL) lie on the Lumenal side of the membrane. A helical transmembrane segment spans residues 788-808 (IPVQLLWVNLVTDGLPATALG). The tract at residues 788–808 (IPVQLLWVNLVTDGLPATALG) is interaction with phospholamban 2. The Ca(2+) site is built by N796, T799, and D800. Residues 809–828 (FNPPDLDIMEKPPRNPREAL) lie on the Cytoplasmic side of the membrane. Residues 829 to 851 (ISGWLFFRYLAIGVYVGLATVAA) traverse the membrane as a helical segment. The Lumenal segment spans residues 852-897 (ATWWFLYDTEGPQVTFYQLRNFLKCSEDNPLFAGIDCKVFESRFPT). The helical transmembrane segment at 898–917 (TMALSVLVTIEMCNALNSVS) threads the bilayer. Position 908 (E908) interacts with Ca(2+). Residues 918–930 (ENQSLLRMPPWLN) are Cytoplasmic-facing. The helical transmembrane segment at 931 to 949 (PWLLGAVVMSMALHFLILL) threads the bilayer. At 950 to 964 (VPPLPLIFQVTPLSG) the chain is on the lumenal side. A helical membrane pass occupies residues 965 to 985 (RQWGVVLQMSLPVILLDEALK). At 986–999 (YLSRNHMDEKKDLK) the chain is on the cytoplasmic side.

This sequence belongs to the cation transport ATPase (P-type) (TC 3.A.3) family. Type IIA subfamily. In terms of assembly, interacts with sarcolipin (SLN). Interacts with phospholamban (PLN). Interacts with myoregulin (MRLN). Interacts with DWORF. Interacts with VMP1. Interacts with TUNAR; the interaction occurs at low levels in low glucose conditions and is increased by high glucose levels. Mg(2+) serves as cofactor.

The protein resides in the endoplasmic reticulum membrane. Its subcellular location is the sarcoplasmic reticulum membrane. The enzyme catalyses Ca(2+)(in) + ATP + H2O = Ca(2+)(out) + ADP + phosphate + H(+). With respect to regulation, inhibited by sarcolipin (SLN), phospholamban (PLN) and myoregulin (MRLN). Enhanced by DWORF; DWORF increases activity by displacing sarcolipin (SLN), phospholamban (PLN) and myoregulin (MRLN). This magnesium-dependent enzyme catalyzes the hydrolysis of ATP coupled with the transport of calcium. Transports calcium ions from the cytosol into the sarcoplasmic/endoplasmic reticulum lumen. Contributes to calcium sequestration involved in muscular excitation/contraction. The sequence is that of Sarcoplasmic/endoplasmic reticulum calcium ATPase 3 (Atp2a3) from Mus musculus (Mouse).